The following is a 403-amino-acid chain: Flavohemoprotein (403 aa).

Residues methionine 1–serine 138 form the Globin domain. A heme b-binding site is contributed by histidine 85. Residues tyrosine 95 and glutamate 137 each act as charge relay system in the active site. The reductase stretch occupies residues glycine 149–glutamate 403. One can recognise an FAD-binding FR-type domain in the interval alanine 152–aspartate 262. Residues tyrosine 190 and arginine 206–serine 209 contribute to the FAD site. Glycine 275–proline 280 serves as a coordination point for NADP(+). Position 395–398 (valine 395–proline 398) interacts with FAD.

Belongs to the globin family. Two-domain flavohemoproteins subfamily. It in the C-terminal section; belongs to the flavoprotein pyridine nucleotide cytochrome reductase family. Requires heme b as cofactor. FAD is required as a cofactor.

The enzyme catalyses 2 nitric oxide + NADPH + 2 O2 = 2 nitrate + NADP(+) + H(+). It catalyses the reaction 2 nitric oxide + NADH + 2 O2 = 2 nitrate + NAD(+) + H(+). In terms of biological role, is involved in NO detoxification in an aerobic process, termed nitric oxide dioxygenase (NOD) reaction that utilizes O(2) and NAD(P)H to convert NO to nitrate, which protects the bacterium from various noxious nitrogen compounds. Therefore, plays a central role in the inducible response to nitrosative stress. This is Flavohemoprotein from Rhizobium meliloti (strain 1021) (Ensifer meliloti).